A 1108-amino-acid chain; its full sequence is Multidrug resistance regulator 1 (1108 aa).

Polar residues predominate over residues 1–19; the sequence is MSIATTPIETPKSPKSTEP. The interval 1–27 is disordered; that stretch reads MSIATTPIETPKSPKSTEPQVRKRKKV. Positions 31 to 59 form a DNA-binding region, zn(2)-C6 fungal-type; sequence CTNCRKRKIRCDRQHPCNNCIKSKKHNAC. A compositionally biased stretch (polar residues) spans 68-83; it reads PANFSTNGSSHGNTVP. 3 disordered regions span residues 68-138, 968-990, and 1021-1064; these read PANF…SENE, DQTY…LDSR, and AQQQ…YYGN. Basic and acidic residues-rich tracts occupy residues 86–104 and 114–123; these read RPYE…EAPR and NERKNSKKSP. Over residues 124 to 138 the composition is skewed to polar residues; that stretch reads DNTVANNQQTASENE. Positions 134-165 form a coiled coil; it reads ASENEVTITLSELNMLKQRLQNIEANINAQSN. Low complexity-rich tracts occupy residues 970–980 and 1023–1041; these read TYSTSSESSST and QQRQ…QSQS.

The protein resides in the nucleus. Its function is as follows. Transcription factor that acts as the central regulator of the MDR1 efflux pump. Other target genes include those encoding oxidoreductases, whose up-regulation in fluconazole-resistant isolates may help to prevent cell damage resulting from the generation of toxic molecules in the presence of fluconazole and thereby contribute to drug resistance. The sequence is that of Multidrug resistance regulator 1 from Candida albicans (strain SC5314 / ATCC MYA-2876) (Yeast).